The chain runs to 67 residues: Small ribosomal subunit protein eS31 (67 aa).

Cysteine 31, cysteine 34, cysteine 49, and cysteine 52 together coordinate Zn(2+). The C4-type zinc-finger motif lies at 31-52; the sequence is CPKCGAGVFMAEHLNRFACGKC.

This sequence belongs to the eukaryotic ribosomal protein eS31 family. As to quaternary structure, part of the 30S ribosomal subunit. Requires Zn(2+) as cofactor.

The polypeptide is Small ribosomal subunit protein eS31 (Methanococcus maripaludis (strain C5 / ATCC BAA-1333)).